The sequence spans 180 residues: UPF0134 protein MPN_127 (180 aa).

The protein belongs to the UPF0134 family.

The polypeptide is UPF0134 protein MPN_127 (Mycoplasma pneumoniae (strain ATCC 29342 / M129 / Subtype 1) (Mycoplasmoides pneumoniae)).